The primary structure comprises 348 residues: Protein RecA (348 aa).

68-75 (GPESSGKT) contributes to the ATP binding site.

It belongs to the RecA family.

The protein resides in the cytoplasm. Its function is as follows. Can catalyze the hydrolysis of ATP in the presence of single-stranded DNA, the ATP-dependent uptake of single-stranded DNA by duplex DNA, and the ATP-dependent hybridization of homologous single-stranded DNAs. It interacts with LexA causing its activation and leading to its autocatalytic cleavage. The polypeptide is Protein RecA (Rhodococcus opacus (strain B4)).